The primary structure comprises 76 residues: Conotoxin Ca11b (76 aa).

The signal sequence occupies residues methionine 1–glycine 19. Positions alanine 20–lysine 42 are excised as a propeptide. Intrachain disulfides connect cysteine 46/cysteine 60, cysteine 53/cysteine 65, cysteine 59/cysteine 69, and cysteine 64/cysteine 76.

As to expression, expressed by the venom duct.

The protein localises to the secreted. The chain is Conotoxin Ca11b from Conus caracteristicus (Characteristic cone).